An 859-amino-acid polypeptide reads, in one-letter code: Photoactivated adenylate cyclase subunit beta-like protein FB (859 aa).

Residues 56 to 149 (LRRLMYLSKS…GRMYGDWHMK (94 aa)) form the BLUF 1 domain. The 129-residue stretch at 205 to 333 (VVTFIYLVEF…DCINTTSRIA (129 aa)) folds into the Guanylate cyclase 1 domain. The segment at 414 to 449 (GLPNSQRPPIFDDTPKANRRPRTPGYGGRQRSDSQV) is disordered. The BLUF 2 domain maps to 471-563 (LTTLTYISQA…RVYPSEWTLT (93 aa)). A Guanylate cyclase 2 domain is found at 619–748 (VMLATDICSF…AVSARVMEVE (130 aa)). The tract at residues 813 to 859 (AARSGEKPLTEPEAAKPDFRVSPGRVRHGDSGRRSNSAQGKRSIQVR) is disordered. Residues 815 to 831 (RSGEKPLTEPEAAKPDF) are compositionally biased toward basic and acidic residues. Positions 846–859 (RSNSAQGKRSIQVR) are enriched in polar residues.

It belongs to the adenylyl cyclase class-4/guanylyl cyclase family. Heterotetramer of two alpha and two beta subunits.

The protein resides in the cell projection. Its subcellular location is the cilium. It localises to the flagellum. This is Photoactivated adenylate cyclase subunit beta-like protein FB from Euglena gracilis.